A 461-amino-acid polypeptide reads, in one-letter code: Cysteine--tRNA ligase (461 aa).

Zn(2+) is bound at residue Cys28. The short motif at 30–40 (ITVYDLCHIGH) is the 'HIGH' region element. Residues Cys209, His234, and Glu238 each coordinate Zn(2+). The short motif at 266-270 (KMSKS) is the 'KMSKS' region element. Lys269 is a binding site for ATP.

The protein belongs to the class-I aminoacyl-tRNA synthetase family. Monomer. Requires Zn(2+) as cofactor.

It localises to the cytoplasm. It carries out the reaction tRNA(Cys) + L-cysteine + ATP = L-cysteinyl-tRNA(Cys) + AMP + diphosphate. The polypeptide is Cysteine--tRNA ligase (Escherichia coli O17:K52:H18 (strain UMN026 / ExPEC)).